Reading from the N-terminus, the 408-residue chain is tRNA pseudouridine synthase D (408 aa).

Asp-76 (nucleophile) is an active-site residue. The 214-residue stretch at 149 to 362 folds into the TRUD domain; the sequence is GFINYYDSQR…NSFERKVRIL (214 aa).

Belongs to the pseudouridine synthase TruD family.

The catalysed reaction is uridine(13) in tRNA = pseudouridine(13) in tRNA. Its function is as follows. Responsible for synthesis of pseudouridine from uracil-13 in transfer RNAs. The chain is tRNA pseudouridine synthase D from Leptospira interrogans serogroup Icterohaemorrhagiae serovar Lai (strain 56601).